The primary structure comprises 186 residues: Peptidyl-tRNA hydrolase (186 aa).

A tRNA-binding site is contributed by tyrosine 14. Histidine 19 functions as the Proton acceptor in the catalytic mechanism. The tRNA site is built by tyrosine 61, asparagine 63, and asparagine 107.

Belongs to the PTH family. In terms of assembly, monomer.

The protein resides in the cytoplasm. The enzyme catalyses an N-acyl-L-alpha-aminoacyl-tRNA + H2O = an N-acyl-L-amino acid + a tRNA + H(+). Hydrolyzes ribosome-free peptidyl-tRNAs (with 1 or more amino acids incorporated), which drop off the ribosome during protein synthesis, or as a result of ribosome stalling. Its function is as follows. Catalyzes the release of premature peptidyl moieties from peptidyl-tRNA molecules trapped in stalled 50S ribosomal subunits, and thus maintains levels of free tRNAs and 50S ribosomes. The polypeptide is Peptidyl-tRNA hydrolase (Helicobacter pylori (strain Shi470)).